An 813-amino-acid polypeptide reads, in one-letter code: DNA ligase (813 aa).

NAD(+) contacts are provided by residues 41–45 (DAEYD), 90–91 (SI), and Glu127. Lys129 functions as the N6-AMP-lysine intermediate in the catalytic mechanism. Arg150, Glu189, Lys307, and Lys331 together coordinate NAD(+). Residues Cys440, Cys443, Cys458, and Cys464 each coordinate Zn(2+). Positions 729–813 (AEEGALSGKT…LLQNPPGDSA (85 aa)) constitute a BRCT domain.

This sequence belongs to the NAD-dependent DNA ligase family. LigA subfamily. It depends on Mg(2+) as a cofactor. Mn(2+) is required as a cofactor.

It carries out the reaction NAD(+) + (deoxyribonucleotide)n-3'-hydroxyl + 5'-phospho-(deoxyribonucleotide)m = (deoxyribonucleotide)n+m + AMP + beta-nicotinamide D-nucleotide.. DNA ligase that catalyzes the formation of phosphodiester linkages between 5'-phosphoryl and 3'-hydroxyl groups in double-stranded DNA using NAD as a coenzyme and as the energy source for the reaction. It is essential for DNA replication and repair of damaged DNA. This is DNA ligase from Ralstonia nicotianae (strain ATCC BAA-1114 / GMI1000) (Ralstonia solanacearum).